A 103-amino-acid chain; its full sequence is Co-chaperonin GroES (103 aa).

This sequence belongs to the GroES chaperonin family. Heptamer of 7 subunits arranged in a ring. Interacts with the chaperonin GroEL.

The protein localises to the cytoplasm. Its function is as follows. Together with the chaperonin GroEL, plays an essential role in assisting protein folding. The GroEL-GroES system forms a nano-cage that allows encapsulation of the non-native substrate proteins and provides a physical environment optimized to promote and accelerate protein folding. GroES binds to the apical surface of the GroEL ring, thereby capping the opening of the GroEL channel. The sequence is that of Co-chaperonin GroES from Parasynechococcus marenigrum (strain WH8102).